A 335-amino-acid polypeptide reads, in one-letter code: Holliday junction branch migration complex subunit RuvB (335 aa).

The interval 1–183 is large ATPase domain (RuvB-L); sequence MDERIISSET…FGVIDHLEFY (183 aa). ATP is bound by residues Leu-22, Arg-23, Gly-64, Lys-67, Thr-68, Thr-69, 130 to 132, Arg-173, Tyr-183, and Arg-220; that span reads EDY. Thr-68 contacts Mg(2+). Residues 184–254 form a small ATPAse domain (RuvB-S) region; the sequence is TEEQLTEIVL…LAKEALTLLQ (71 aa). Residues 257–335 form a head domain (RuvB-H) region; sequence PRGLDTIDQK…HLGISYEKEV (79 aa). Positions 293, 312, and 317 each coordinate DNA.

This sequence belongs to the RuvB family. Homohexamer. Forms an RuvA(8)-RuvB(12)-Holliday junction (HJ) complex. HJ DNA is sandwiched between 2 RuvA tetramers; dsDNA enters through RuvA and exits via RuvB. An RuvB hexamer assembles on each DNA strand where it exits the tetramer. Each RuvB hexamer is contacted by two RuvA subunits (via domain III) on 2 adjacent RuvB subunits; this complex drives branch migration. In the full resolvosome a probable DNA-RuvA(4)-RuvB(12)-RuvC(2) complex forms which resolves the HJ.

The protein resides in the cytoplasm. The enzyme catalyses ATP + H2O = ADP + phosphate + H(+). The RuvA-RuvB-RuvC complex processes Holliday junction (HJ) DNA during genetic recombination and DNA repair, while the RuvA-RuvB complex plays an important role in the rescue of blocked DNA replication forks via replication fork reversal (RFR). RuvA specifically binds to HJ cruciform DNA, conferring on it an open structure. The RuvB hexamer acts as an ATP-dependent pump, pulling dsDNA into and through the RuvAB complex. RuvB forms 2 homohexamers on either side of HJ DNA bound by 1 or 2 RuvA tetramers; 4 subunits per hexamer contact DNA at a time. Coordinated motions by a converter formed by DNA-disengaged RuvB subunits stimulates ATP hydrolysis and nucleotide exchange. Immobilization of the converter enables RuvB to convert the ATP-contained energy into a lever motion, pulling 2 nucleotides of DNA out of the RuvA tetramer per ATP hydrolyzed, thus driving DNA branch migration. The RuvB motors rotate together with the DNA substrate, which together with the progressing nucleotide cycle form the mechanistic basis for DNA recombination by continuous HJ branch migration. Branch migration allows RuvC to scan DNA until it finds its consensus sequence, where it cleaves and resolves cruciform DNA. The sequence is that of Holliday junction branch migration complex subunit RuvB from Listeria monocytogenes serotype 4b (strain CLIP80459).